The sequence spans 601 residues: NADH-quinone oxidoreductase subunit C/D (601 aa).

Residues methionine 1–glutamine 191 are NADH dehydrogenase I subunit C. An NADH dehydrogenase I subunit D region spans residues aspartate 215–arginine 601.

In the N-terminal section; belongs to the complex I 30 kDa subunit family. This sequence in the C-terminal section; belongs to the complex I 49 kDa subunit family. NDH-1 is composed of 13 different subunits. Subunits NuoB, CD, E, F, and G constitute the peripheral sector of the complex.

Its subcellular location is the cell inner membrane. It catalyses the reaction a quinone + NADH + 5 H(+)(in) = a quinol + NAD(+) + 4 H(+)(out). NDH-1 shuttles electrons from NADH, via FMN and iron-sulfur (Fe-S) centers, to quinones in the respiratory chain. The immediate electron acceptor for the enzyme in this species is believed to be ubiquinone. Couples the redox reaction to proton translocation (for every two electrons transferred, four hydrogen ions are translocated across the cytoplasmic membrane), and thus conserves the redox energy in a proton gradient. This Aeromonas salmonicida (strain A449) protein is NADH-quinone oxidoreductase subunit C/D.